Consider the following 193-residue polypeptide: Acyl-homoserine-lactone synthase (193 aa).

It belongs to the autoinducer synthase family.

It catalyses the reaction a fatty acyl-[ACP] + S-adenosyl-L-methionine = an N-acyl-L-homoserine lactone + S-methyl-5'-thioadenosine + holo-[ACP] + H(+). In terms of biological role, required for the synthesis of OHHL (N-(3-oxohexanoyl)-L-homoserine lactone) also known as VAI or N-(beta-ketocaproyl)homoserine lactone or 3-oxo-N-(tetrahydro-2-oxo-3-furanyl)-hexanamide, an autoinducer molecule which binds to LuxR and thus acts in bioluminescence regulation. The polypeptide is Acyl-homoserine-lactone synthase (luxI) (Aliivibrio fischeri (Vibrio fischeri)).